We begin with the raw amino-acid sequence, 181 residues long: ATP-dependent protease subunit HslV (181 aa).

Residue threonine 7 is part of the active site. Na(+)-binding residues include glycine 166, cysteine 169, and threonine 172.

This sequence belongs to the peptidase T1B family. HslV subfamily. In terms of assembly, a double ring-shaped homohexamer of HslV is capped on each side by a ring-shaped HslU homohexamer. The assembly of the HslU/HslV complex is dependent on binding of ATP.

Its subcellular location is the cytoplasm. The enzyme catalyses ATP-dependent cleavage of peptide bonds with broad specificity.. Its activity is regulated as follows. Allosterically activated by HslU binding. Its function is as follows. Protease subunit of a proteasome-like degradation complex believed to be a general protein degrading machinery. In Acidovorax ebreus (strain TPSY) (Diaphorobacter sp. (strain TPSY)), this protein is ATP-dependent protease subunit HslV.